A 204-amino-acid chain; its full sequence is 3-isopropylmalate dehydratase small subunit (204 aa).

It belongs to the LeuD family. LeuD type 1 subfamily. In terms of assembly, heterodimer of LeuC and LeuD.

It catalyses the reaction (2R,3S)-3-isopropylmalate = (2S)-2-isopropylmalate. Its pathway is amino-acid biosynthesis; L-leucine biosynthesis; L-leucine from 3-methyl-2-oxobutanoate: step 2/4. Its function is as follows. Catalyzes the isomerization between 2-isopropylmalate and 3-isopropylmalate, via the formation of 2-isopropylmaleate. This is 3-isopropylmalate dehydratase small subunit from Roseiflexus castenholzii (strain DSM 13941 / HLO8).